We begin with the raw amino-acid sequence, 68 residues long: Protein SlyX homolog (68 aa).

The protein belongs to the SlyX family.

This chain is Protein SlyX homolog, found in Pseudomonas fluorescens (strain ATCC BAA-477 / NRRL B-23932 / Pf-5).